The following is a 146-amino-acid chain: Hemoglobin subunit beta (146 aa).

Val-1 carries the N-acetylvaline modification. Residues 2–146 enclose the Globin domain; sequence HLTPEEKNAV…VANALAHKYH (145 aa). A Phosphothreonine modification is found at Thr-12. Phosphoserine is present on Ser-44. An N6-acetyllysine modification is found at Lys-59. His-63 contacts heme b. An N6-acetyllysine modification is found at Lys-82. Heme b is bound at residue His-92. At Cys-93 the chain carries S-nitrosocysteine. Lys-144 carries the post-translational modification N6-acetyllysine.

The protein belongs to the globin family. In terms of assembly, heterotetramer of two alpha chains and two beta chains. As to expression, red blood cells.

Involved in oxygen transport from the lung to the various peripheral tissues. The chain is Hemoglobin subunit beta (HBB) from Papio cynocephalus (Yellow baboon).